Here is a 139-residue protein sequence, read N- to C-terminus: Hydrogenase maturation factor HypA (139 aa).

Residue His2 coordinates Ni(2+). Positions 73, 76, 110, and 113 each coordinate Zn(2+).

The protein belongs to the HypA/HybF family.

In terms of biological role, involved in the maturation of [NiFe] hydrogenases. Required for nickel insertion into the metal center of the hydrogenase. This Pyrococcus horikoshii (strain ATCC 700860 / DSM 12428 / JCM 9974 / NBRC 100139 / OT-3) protein is Hydrogenase maturation factor HypA.